A 240-amino-acid polypeptide reads, in one-letter code: UPF0309 protein in nagA 3'region (240 aa).

An SIS domain is found at 31-206 (IVKRLVQGGI…CAQIIEILHE (176 aa)).

The protein belongs to the UPF0309 family.

The chain is UPF0309 protein in nagA 3'region from Lysinibacillus sphaericus (Bacillus sphaericus).